The chain runs to 267 residues: Dynein axonemal assembly factor 19 homolog (267 aa).

2 disordered regions span residues 86–111 and 226–250; these read ISQS…RDWR and HQGK…VDPC.

Belongs to the DNAAF19/PR46b family. Homodimer.

The protein localises to the cytoplasm. Its subcellular location is the cell projection. It is found in the cilium. The protein resides in the flagellum. Its function is as follows. Dynein-attachment factor required for cilia motility. This is Dynein axonemal assembly factor 19 homolog (PR46b) from Chlamydomonas reinhardtii (Chlamydomonas smithii).